The sequence spans 600 residues: PWWP domain-containing protein 2B (600 aa).

5 disordered regions span residues 81-115 (ETGPLHPHHKDPEKDQPPKTAVSEPPPPLIPPVPA), 143-171 (WVPQPPPRTIKRTRRRLSRNRDPGRLILS), 186-350 (KSTV…LGDG), 366-408 (GCPR…PQGK), and 426-477 (DCTS…TVPP). Over residues 104-115 (EPPPPLIPPVPA) the composition is skewed to pro residues. Basic residues predominate over residues 151-160 (TIKRTRRRLS). The segment covering 187–200 (STVSPQEASPSPLN) has biased composition (polar residues). Phosphoserine is present on residues Ser190 and Ser210. Residues 239–252 (EKREEDRVAGERVP) are compositionally biased toward basic and acidic residues. Ser254 bears the Phosphoserine mark. The segment covering 286 to 297 (PQQSLQNGSQDS) has biased composition (polar residues). Positions 298-309 (EVSRDVEPRGGG) are enriched in basic and acidic residues. Positions 328 to 339 (PVPPISDLPPPK) are enriched in pro residues. The span at 381-395 (DGSSHGLEDLSSGSS) shows a compositional bias: low complexity. Residues 443–456 (SSGSEVTSPDTGDL) are compositionally biased toward polar residues. Phosphoserine is present on Ser457. A compositionally biased stretch (low complexity) spans 457–468 (SSGDSASVPSSS). The PWWP domain maps to 500-560 (VGDIVWGKIH…ISKLSPFSEF (61 aa)).

Component of a MTA1-specific subcomplex of the NuRD complex composed of PWWP2B, MTA1 and HDAC1 but does not contain CHD4 and MBD3. Interacts with MTA1, MTA2, MTA3, HDAC1, HDAC2, RBBP4, RBBP7, BRCC3 and ZNF516. Does not interact with CHD4 and MBD3. In terms of processing, deubiquitinated by BRCC3; leading to its stabilization. Expressed in the brown adipose tissue.

The protein resides in the nucleus. Chromatin-binding protein that acts as an adapter between distinct nucleosome components (H3K36me3 or H2A.Z) and chromatin-modifying complexes, contributing to the regulation of the levels of histone acetylation at actively transcribed genes. Competes with CHD4 and MBD3 for interaction with MTA1 to form a NuRD subcomplex, preventing the formation of full NuRD complex (containing CHD4 and MBD3), leading to recruitment of HDACs to gene promoters resulting in turn in the deacetylation of nearby H3K27 and H2A.Z. Plays a role in facilitating transcriptional elongation through regulation of histone acetylation. Negatively regulates brown adipocyte thermogenesis by interacting with and stabilizing HDAC1 at the UCP1 gene promoter, thereby promoting histone deacetylation at the promoter leading to the repression of UCP1 expression. This is PWWP domain-containing protein 2B (Pwwp2b) from Mus musculus (Mouse).